Consider the following 60-residue polypeptide: Large ribosomal subunit protein bL32 (60 aa).

The span at 1–23 (MAKHPVPKKKTSKARRDARRSHH) shows a compositional bias: basic residues. The interval 1-28 (MAKHPVPKKKTSKARRDARRSHHALTPP) is disordered.

This sequence belongs to the bacterial ribosomal protein bL32 family. Part of the 50S ribosomal subunit.

Functionally, found on the solvent side of the large subunit. This Thermus thermophilus (strain ATCC BAA-163 / DSM 7039 / HB27) protein is Large ribosomal subunit protein bL32 (rpmF).